The sequence spans 207 residues: Ubiquinol-cytochrome c reductase iron-sulfur subunit (207 aa).

The helical transmembrane segment at 24–44 (LVAATSVVGAVGAGYALVPFV) threads the bilayer. One can recognise a Rieske domain in the interval 100-199 (PKLVDPTSEV…HVYLNDTTIL (100 aa)). [2Fe-2S] cluster contacts are provided by cysteine 134, histidine 136, cysteine 162, and histidine 165. Cysteine 139 and cysteine 164 are joined by a disulfide.

The main subunits of complex b-c1 are: cytochrome b, cytochrome c1 and the Rieske protein. Requires [2Fe-2S] cluster as cofactor.

It is found in the cell membrane. The catalysed reaction is a quinol + 2 Fe(III)-[cytochrome c](out) = a quinone + 2 Fe(II)-[cytochrome c](out) + 2 H(+)(out). Component of the ubiquinol-cytochrome c reductase complex (complex III or cytochrome b-c1 complex), which is a respiratory chain that generates an electrochemical potential coupled to ATP synthesis. The chain is Ubiquinol-cytochrome c reductase iron-sulfur subunit (petA) from Allochromatium vinosum (strain ATCC 17899 / DSM 180 / NBRC 103801 / NCIMB 10441 / D) (Chromatium vinosum).